Reading from the N-terminus, the 416-residue chain is uncharacterized protein (416 aa).

A disordered region spans residues 341 to 360 (EDREKGSQHTNNTHHHKRNL).

This is an uncharacterized protein from Human cytomegalovirus (strain AD169) (HHV-5).